Here is a 520-residue protein sequence, read N- to C-terminus: GMP synthase [glutamine-hydrolyzing] (520 aa).

One can recognise a Glutamine amidotransferase type-1 domain in the interval Lys-13–Asp-205. The Nucleophile role is filled by Cys-90. Residues His-179 and Glu-181 contribute to the active site. The GMPS ATP-PPase domain occupies Trp-206–Arg-395. Ser-233–Ser-239 contacts ATP.

Homodimer.

It catalyses the reaction XMP + L-glutamine + ATP + H2O = GMP + L-glutamate + AMP + diphosphate + 2 H(+). Its pathway is purine metabolism; GMP biosynthesis; GMP from XMP (L-Gln route): step 1/1. Functionally, catalyzes the synthesis of GMP from XMP. This chain is GMP synthase [glutamine-hydrolyzing], found in Streptococcus pneumoniae serotype 2 (strain D39 / NCTC 7466).